A 193-amino-acid polypeptide reads, in one-letter code: NADPH:quinone oxidoreductase MdaB (193 aa).

Residues Ser-16–Thr-23, Gly-69–Met-72, Tyr-108, and Thr-124–Ala-127 each bind FAD.

Belongs to the oxidoreductase MdaB family. Homodimer. The cofactor is FAD.

The protein localises to the cytoplasm. The catalysed reaction is a quinone + NADPH + H(+) = a quinol + NADP(+). Functionally, NADPH-specific quinone reductase. This is NADPH:quinone oxidoreductase MdaB from Escherichia coli O157:H7.